The primary structure comprises 356 residues: S-adenosylmethionine:tRNA ribosyltransferase-isomerase (356 aa).

It belongs to the QueA family. As to quaternary structure, monomer.

It is found in the cytoplasm. It carries out the reaction 7-aminomethyl-7-carbaguanosine(34) in tRNA + S-adenosyl-L-methionine = epoxyqueuosine(34) in tRNA + adenine + L-methionine + 2 H(+). Its pathway is tRNA modification; tRNA-queuosine biosynthesis. In terms of biological role, transfers and isomerizes the ribose moiety from AdoMet to the 7-aminomethyl group of 7-deazaguanine (preQ1-tRNA) to give epoxyqueuosine (oQ-tRNA). The chain is S-adenosylmethionine:tRNA ribosyltransferase-isomerase from Histophilus somni (strain 2336) (Haemophilus somnus).